Here is a 277-residue protein sequence, read N- to C-terminus: Putative thiosulfate sulfurtransferase (277 aa).

Rhodanese domains lie at 18-125 (HAPK…PLSS) and 154-274 (AINV…APIE). C233 functions as the Cysteine persulfide intermediate in the catalytic mechanism. R238 is a binding site for substrate.

The enzyme catalyses thiosulfate + hydrogen cyanide = thiocyanate + sulfite + 2 H(+). Its function is as follows. May be a sulfotransferase involved in the formation of thiosulfate. The polypeptide is Putative thiosulfate sulfurtransferase (cysA1) (Mycobacterium tuberculosis (strain CDC 1551 / Oshkosh)).